The sequence spans 45 residues: Myotoxin-2 (45 aa).

Intrachain disulfides connect Cys-4–Cys-36, Cys-11–Cys-30, and Cys-18–Cys-37.

It belongs to the crotamine-myotoxin family. In terms of assembly, monomer. Expressed by the venom gland.

It is found in the secreted. Its function is as follows. Cationic peptide that possesses multiple functions. It acts as a cell-penetrating peptide (CPP), and as a potent voltage-gated potassium channel (Kv) inhibitor. It exhibits antimicrobial activities, hind limb paralysis, and severe muscle necrosis by a non-enzymatic mechanism. This chain is Myotoxin-2, found in Crotalus viridis viridis (Prairie rattlesnake).